A 148-amino-acid chain; its full sequence is MGFTEKQEALVNASYEAFKQNLPGNSVLFYSFILEKAPAAKGMFSFLKDSDGVPQNNPSLQAHAEKVFGLVRDSAAQLRATGVVVLADASLGSVHVQKGVLDPHFVVVKEALLKTLKEAAGATWSDEVSNAWEVAYDGLSAAIKKAMS.

The Globin domain maps to 2–148; sequence GFTEKQEALV…LSAAIKKAMS (147 aa). Tyrosine 30 is modified (nitrated tyrosine). Position 45 (serine 45) interacts with heme b. Phosphoserine is present on serine 45. O2 is bound at residue histidine 63. Heme b-binding residues include lysine 66, histidine 95, and lysine 98. A Nitrated tyrosine modification is found at tyrosine 136.

It belongs to the plant globin family. In terms of assembly, monomer. Post-translationally, nitrated in effective nodules and particularly in hypoxic conditions; this mechanism may play a protective role in the symbiosis by buffering toxic peroxynitrite NO(2)(-). Nitration level decrease during nodule senescence. Phosphorylation at Ser-45 disrupts the molecular environment of its porphyrin ring oxygen binding pocket, thus leading to a reduced oxygen consumption and to the delivery of oxygen O(2) to symbiosomes. Stem nodules.

The protein resides in the cytoplasm. The protein localises to the cytosol. Its subcellular location is the nucleus. In terms of biological role, leghemoglobin that reversibly binds oxygen O(2) through a pentacoordinated heme iron. In stem nodules, facilitates the diffusion of oxygen to the bacteroids while preventing the bacterial nitrogenase from being inactivated by buffering dioxygen, nitric oxide and carbon monoxide, and promoting the formation of reactive oxygen species (ROS, e.g. H(2)O(2)). This role is essential for symbiotic nitrogen fixation (SNF). The chain is Leghemoglobin 2 from Sesbania rostrata.